The primary structure comprises 320 residues: Cytosolic Fe-S cluster assembly factor NUBP1 (320 aa).

Position 1 is an N-acetylmethionine (Met1). Residues Cys8, Cys22, Cys25, and Cys31 each contribute to the [4Fe-4S] cluster site. 62–69 (GKGGVGKS) contacts ATP. Residues Cys235 and Cys238 each coordinate [4Fe-4S] cluster.

This sequence belongs to the Mrp/NBP35 ATP-binding proteins family. NUBP1/NBP35 subfamily. In terms of assembly, heterotetramer of 2 NUBP1 and 2 NUBP2 chains. Interacts with KIFC1. Interacts with the BBS/CCT complex subunit CCT1. The cofactor is [4Fe-4S] cluster.

The protein localises to the cytoplasm. It localises to the nucleus. It is found in the cell projection. Its subcellular location is the cytoskeleton. The protein resides in the cilium axoneme. The protein localises to the cilium basal body. It localises to the microtubule organizing center. It is found in the centrosome. Its subcellular location is the centriole. In terms of biological role, component of the cytosolic iron-sulfur (Fe/S) protein assembly (CIA) machinery. Required for maturation of extramitochondrial Fe-S proteins. The NUBP1-NUBP2 heterotetramer forms a Fe-S scaffold complex, mediating the de novo assembly of an Fe-S cluster and its transfer to target apoproteins. Implicated in the regulation of centrosome duplication. Negatively regulates cilium formation and structure. This is Cytosolic Fe-S cluster assembly factor NUBP1 from Bos taurus (Bovine).